The sequence spans 430 residues: Glutamate-1-semialdehyde 2,1-aminomutase (430 aa).

At lysine 265 the chain carries N6-(pyridoxal phosphate)lysine.

This sequence belongs to the class-III pyridoxal-phosphate-dependent aminotransferase family. HemL subfamily. In terms of assembly, homodimer. It depends on pyridoxal 5'-phosphate as a cofactor.

It is found in the cytoplasm. It carries out the reaction (S)-4-amino-5-oxopentanoate = 5-aminolevulinate. It functions in the pathway porphyrin-containing compound metabolism; protoporphyrin-IX biosynthesis; 5-aminolevulinate from L-glutamyl-tRNA(Glu): step 2/2. This is Glutamate-1-semialdehyde 2,1-aminomutase from Shewanella oneidensis (strain ATCC 700550 / JCM 31522 / CIP 106686 / LMG 19005 / NCIMB 14063 / MR-1).